A 420-amino-acid polypeptide reads, in one-letter code: Imidazolonepropionase (420 aa).

Positions 77 and 79 each coordinate Fe(3+). Positions 77 and 79 each coordinate Zn(2+). 4-imidazolone-5-propanoate contacts are provided by arginine 86, tyrosine 149, and histidine 182. Residue tyrosine 149 participates in N-formimidoyl-L-glutamate binding. Histidine 245 contacts Fe(3+). Histidine 245 contacts Zn(2+). Glutamate 248 contacts 4-imidazolone-5-propanoate. Position 319 (aspartate 319) interacts with Fe(3+). Aspartate 319 is a binding site for Zn(2+). Residue asparagine 321 coordinates N-formimidoyl-L-glutamate.

Belongs to the metallo-dependent hydrolases superfamily. HutI family. Zn(2+) is required as a cofactor. Requires Fe(3+) as cofactor.

Its subcellular location is the cytoplasm. It catalyses the reaction 4-imidazolone-5-propanoate + H2O = N-formimidoyl-L-glutamate. The protein operates within amino-acid degradation; L-histidine degradation into L-glutamate; N-formimidoyl-L-glutamate from L-histidine: step 3/3. Catalyzes the hydrolytic cleavage of the carbon-nitrogen bond in imidazolone-5-propanoate to yield N-formimidoyl-L-glutamate. It is the third step in the universal histidine degradation pathway. The protein is Imidazolonepropionase of Haloarcula marismortui (strain ATCC 43049 / DSM 3752 / JCM 8966 / VKM B-1809) (Halobacterium marismortui).